The chain runs to 522 residues: Tyrosine-protein phosphatase 1 (522 aa).

Residues 32-63 form a disordered region; the sequence is RSNSSISLSSSSHSSFSRMGSLGSLPTNSGSS. Low complexity predominate over residues 33 to 63; sequence SNSSISLSSSSHSSFSRMGSLGSLPTNSGSS. A Tyrosine-protein phosphatase domain is found at 97–471; the sequence is IKEEFRLLEE…LFCYKTILDE (375 aa). Cysteine 310 serves as the catalytic Phosphocysteine intermediate. Residues 327–426 are PTPase insert (Asn-rich); the sequence is MKKLDHYFKQ…DDAAESDLKY (100 aa). Residues 382–410 are compositionally biased toward low complexity; it reads NNNNNNNLNNNNNINNNSNGSNNTPQTEP. Residues 382-420 form a disordered region; the sequence is NNNNNNNLNNNNNINNNSNGSNNTPQTEPNNEEDDDDAA. Residues 411–420 show a composition bias toward acidic residues; the sequence is NNEEDDDDAA.

The protein belongs to the protein-tyrosine phosphatase family. Non-receptor class subfamily. Expressed predominantly in anterior-like cells and to a lesser degree in prestalk cells.

The protein resides in the cytoplasm. It is found in the cell membrane. The enzyme catalyses O-phospho-L-tyrosyl-[protein] + H2O = L-tyrosyl-[protein] + phosphate. In terms of biological role, may have a role in growth and in the early stages of development. Affects the timing of development. In Dictyostelium discoideum (Social amoeba), this protein is Tyrosine-protein phosphatase 1 (ptpA1-1).